The chain runs to 533 residues: Berberine bridge enzyme-like 12 (533 aa).

An N-terminal signal peptide occupies residues 1 to 20 (MYLIFLLFFAASYSMSLSSA). C32 and C95 are oxidised to a cystine. N35, N70, N133, N296, N412, and N417 each carry an N-linked (GlcNAc...) asparagine glycan. An FAD-binding PCMH-type domain is found at 73–249 (SMPKPSIIIV…LAFKVKLVTV (177 aa)). Residues 110–174 (HDYDGLSYVS…EVHAFPAGVC (65 aa)) constitute a cross-link (6-(S-cysteinyl)-8alpha-(pros-histidyl)-FAD (His-Cys)).

This sequence belongs to the oxygen-dependent FAD-linked oxidoreductase family. It depends on FAD as a cofactor. In terms of processing, the FAD cofactor is bound via a bicovalent 6-S-cysteinyl, 8alpha-N1-histidyl FAD linkage.

The protein localises to the secreted. It localises to the cell wall. The protein is Berberine bridge enzyme-like 12 of Arabidopsis thaliana (Mouse-ear cress).